We begin with the raw amino-acid sequence, 621 residues long: Zinc metalloproteinase-disintegrin-like TSV-DM (621 aa).

The N-terminal stretch at 1–20 is a signal peptide; it reads MIQVLLVTICLAVFPYQGSS. The propeptide occupies 21–191; sequence IILESGNVND…EASQSNLTPE (171 aa). Gln-192 carries the post-translational modification Pyrrolidone carboxylic acid. The 197-residue stretch at 200 to 396 folds into the Peptidase M12B domain; the sequence is KYVKFFLVAD…NMPQCILKKP (197 aa). Residue Asn-219 is glycosylated (N-linked (GlcNAc...) asparagine). Disulfide bonds link Cys-311-Cys-391, Cys-351-Cys-375, and Cys-353-Cys-358. His-336 lines the Zn(2+) pocket. Glu-337 is an active-site residue. 2 residues coordinate Zn(2+): His-340 and His-346. The 86-residue stretch at 404-489 folds into the Disintegrin domain; sequence PPVCGNYFVE…AECTDRFQRN (86 aa). Ca(2+)-binding residues include Val-406, Asn-409, Phe-411, Glu-413, Glu-416, and Asp-419. 14 cysteine pairs are disulfide-bonded: Cys-407–Cys-436, Cys-418–Cys-431, Cys-420–Cys-426, Cys-430–Cys-453, Cys-444–Cys-450, Cys-449–Cys-475, Cys-462–Cys-482, Cys-469–Cys-500, Cys-493–Cys-505, Cys-512–Cys-562, Cys-527–Cys-573, Cys-540–Cys-550, Cys-557–Cys-599, and Cys-593–Cys-605. A D/ECD-tripeptide motif is present at residues 468–470; the sequence is ECD. Asp-470, Met-471, Asp-473, Asp-484, and Arg-485 together coordinate Ca(2+). N-linked (GlcNAc...) asparagine glycosylation is present at Asn-502.

This sequence belongs to the venom metalloproteinase (M12B) family. P-III subfamily. P-IIIc sub-subfamily. In terms of assembly, homodimer; disulfide-linked. Zn(2+) is required as a cofactor. Post-translationally, the N-terminus is blocked. Expressed by the venom gland.

The protein localises to the secreted. Its activity is regulated as follows. Inhibited by EDTA and DTT, and partially inhibited by EGTA, but not inhibited by PMSF and NEM. Functionally, snake venom zinc metalloprotease that hydrolyzes the alpha-chain (FGA) and more slowly the beta-chain (FGB) of fibrinogen. Inhibits cell proliferation and induces cell morphologic changes transiently on human umbilical vein endothelial cells. The chain is Zinc metalloproteinase-disintegrin-like TSV-DM from Trimeresurus stejnegeri (Chinese green tree viper).